Consider the following 345-residue polypeptide: Phosphoribosylformylglycinamidine cyclo-ligase (345 aa).

Belongs to the AIR synthase family.

It localises to the cytoplasm. The catalysed reaction is 2-formamido-N(1)-(5-O-phospho-beta-D-ribosyl)acetamidine + ATP = 5-amino-1-(5-phospho-beta-D-ribosyl)imidazole + ADP + phosphate + H(+). It functions in the pathway purine metabolism; IMP biosynthesis via de novo pathway; 5-amino-1-(5-phospho-D-ribosyl)imidazole from N(2)-formyl-N(1)-(5-phospho-D-ribosyl)glycinamide: step 2/2. This chain is Phosphoribosylformylglycinamidine cyclo-ligase, found in Methylococcus capsulatus (strain ATCC 33009 / NCIMB 11132 / Bath).